Reading from the N-terminus, the 301-residue chain is Cell division control protein 2 homolog 1 (301 aa).

The Protein kinase domain occupies 5 to 297 (YERLQKIGEG…AAQALEHPYF (293 aa)). Residues 11 to 19 (IGEGSYGVV) and lysine 34 each bind ATP. Phosphoserine is present on serine 15. At tyrosine 16 the chain carries Phosphotyrosine. The active-site Proton acceptor is aspartate 127. Position 160 is a phosphothreonine; by CAK (threonine 160).

The protein belongs to the protein kinase superfamily. CMGC Ser/Thr protein kinase family. CDC2/CDKX subfamily. As to quaternary structure, forms a stable but non-covalent complex with a regulatory subunit and with a cyclin.

The enzyme catalyses L-seryl-[protein] + ATP = O-phospho-L-seryl-[protein] + ADP + H(+). It carries out the reaction L-threonyl-[protein] + ATP = O-phospho-L-threonyl-[protein] + ADP + H(+). Phosphorylation at Ser-15 or Tyr-16 inactivates the enzyme, while phosphorylation at Thr-160 activates it. Its function is as follows. Probably involved in the control of the cell cycle. This Trypanosoma brucei brucei protein is Cell division control protein 2 homolog 1 (CRK1).